The sequence spans 785 residues: Arrestin domain-containing protein D (785 aa).

5 disordered regions span residues 29 to 69 (QNES…SKYP), 172 to 205 (ILLPTTTSTQNSTLSPTLLSSNLNSKSSTTTTTT), 326 to 367 (SNNS…ITNN), 435 to 486 (SNSN…SDHN), and 608 to 642 (YSSSGSGSGSGSSNSNSNHSSSNYLNEQEENLDEQ). The segment covering 173-205 (LLPTTTSTQNSTLSPTLLSSNLNSKSSTTTTTT) has biased composition (low complexity). A compositionally biased stretch (low complexity) spans 435–450 (SNSNSSSSGGSSNKNN). Over residues 466–478 (SNKKSSGSHRYHY) the composition is skewed to basic residues. Positions 608 to 633 (YSSSGSGSGSGSSNSNSNHSSSNYLN) are enriched in low complexity. The FYVE-type zinc finger occupies 682-742 (ESSITNCNLC…ICLMCFDAVK (61 aa)). Cys688, Cys691, Cys704, Cys707, Cys712, Cys715, Cys734, and Cys737 together coordinate Zn(2+). An RING-type; degenerate zinc finger spans residues 688–738 (CNLCDNTFTIIRRTHHCRACGGVFCEACSNQKVCLYGFGVNNKVRICLMCF).

Belongs to the arrestin family.

The protein is Arrestin domain-containing protein D (adcD) of Dictyostelium discoideum (Social amoeba).